Here is a 197-residue protein sequence, read N- to C-terminus: Imidazoleglycerol-phosphate dehydratase (197 aa).

This sequence belongs to the imidazoleglycerol-phosphate dehydratase family.

The protein resides in the cytoplasm. The catalysed reaction is D-erythro-1-(imidazol-4-yl)glycerol 3-phosphate = 3-(imidazol-4-yl)-2-oxopropyl phosphate + H2O. It functions in the pathway amino-acid biosynthesis; L-histidine biosynthesis; L-histidine from 5-phospho-alpha-D-ribose 1-diphosphate: step 6/9. This chain is Imidazoleglycerol-phosphate dehydratase, found in Methanocaldococcus jannaschii (strain ATCC 43067 / DSM 2661 / JAL-1 / JCM 10045 / NBRC 100440) (Methanococcus jannaschii).